The sequence spans 405 residues: Tryptophan synthase beta chain (405 aa).

An N6-(pyridoxal phosphate)lysine modification is found at Lys98.

The protein belongs to the TrpB family. In terms of assembly, tetramer of two alpha and two beta chains. Requires pyridoxal 5'-phosphate as cofactor.

It catalyses the reaction (1S,2R)-1-C-(indol-3-yl)glycerol 3-phosphate + L-serine = D-glyceraldehyde 3-phosphate + L-tryptophan + H2O. It participates in amino-acid biosynthesis; L-tryptophan biosynthesis; L-tryptophan from chorismate: step 5/5. In terms of biological role, the beta subunit is responsible for the synthesis of L-tryptophan from indole and L-serine. The protein is Tryptophan synthase beta chain of Xanthomonas oryzae pv. oryzae (strain MAFF 311018).